An 80-amino-acid chain; its full sequence is 14-3-3-like protein 1 (80 aa).

This sequence belongs to the 14-3-3 family.

This chain is 14-3-3-like protein 1, found in Pseudotsuga menziesii (Douglas-fir).